The chain runs to 233 residues: Proteasome subunit alpha (233 aa).

Belongs to the peptidase T1A family. As to quaternary structure, the 20S proteasome core is composed of 14 alpha and 14 beta subunits that assemble into four stacked heptameric rings, resulting in a barrel-shaped structure. The two inner rings, each composed of seven catalytic beta subunits, are sandwiched by two outer rings, each composed of seven alpha subunits. The catalytic chamber with the active sites is on the inside of the barrel. Has a gated structure, the ends of the cylinder being occluded by the N-termini of the alpha-subunits. Is capped at one or both ends by the proteasome regulatory ATPase, PAN. In terms of processing, the N-terminus is blocked.

It is found in the cytoplasm. The formation of the proteasomal ATPase PAN-20S proteasome complex, via the docking of the C-termini of PAN into the intersubunit pockets in the alpha-rings, triggers opening of the gate for substrate entry. Interconversion between the open-gate and close-gate conformations leads to a dynamic regulation of the 20S proteasome proteolysis activity. Component of the proteasome core, a large protease complex with broad specificity involved in protein degradation. The T.acidophilum proteasome is able to cleave oligopeptides after Tyr, Leu, Phe, and to a lesser extent after Glu and Arg. Thus, displays chymotrypsin-like activity and low level of caspase-like and trypsin-like activities. The protein is Proteasome subunit alpha of Thermoplasma acidophilum (strain ATCC 25905 / DSM 1728 / JCM 9062 / NBRC 15155 / AMRC-C165).